The primary structure comprises 911 residues: Probable 2-oxoadipate dehydrogenase complex component E1 homolog (911 aa).

The protein belongs to the alpha-ketoglutarate dehydrogenase family. Requires thiamine diphosphate as cofactor.

It localises to the mitochondrion. The enzyme catalyses N(6)-[(R)-lipoyl]-L-lysyl-[protein] + 2-oxoadipate + H(+) = N(6)-[(R)-S(8)-glutaryldihydrolipoyl]-L-lysyl-[protein] + CO2. Functionally, 2-oxoadipate dehydrogenase (E1a) component of the 2-oxoadipate dehydrogenase complex (OADHC). Participates in the first step, rate limiting for the overall conversion of 2-oxoadipate (alpha-ketoadipate) to glutaryl-CoA and CO(2) catalyzed by the whole OADHC. Catalyzes the irreversible decarboxylation of 2-oxoadipate via the thiamine diphosphate (ThDP) cofactor and subsequent transfer of the decarboxylated acyl intermediate on an oxidized dihydrolipoyl group that is covalently amidated to the E2 enzyme (dihydrolipoyllysine-residue succinyltransferase or DLST). The polypeptide is Probable 2-oxoadipate dehydrogenase complex component E1 homolog (Caenorhabditis elegans).